The sequence spans 244 residues: L-xylulose reductase (244 aa).

At methionine 1 the chain carries N-acetylmethionine. 11 to 40 (LVTGAGKGIGRGTVQALHATGARVVAVSRT) provides a ligand contact to NADP(+). Arginine 21 is modified (omega-N-methylarginine). At serine 46 the chain carries Phosphoserine. Substrate is bound at residue serine 136. Tyrosine 149 acts as the Proton acceptor in catalysis. Residue lysine 153 coordinates NADP(+).

The protein belongs to the short-chain dehydrogenases/reductases (SDR) family. As to quaternary structure, homotetramer. As to expression, highly expressed in kidney, liver and epididymis. In the epididymis, it is mainly expressed in the proximal and distal sections of the corpus region. Weakly or not expressed in brain, lung, heart, spleen and testis.

It is found in the membrane. The enzyme catalyses xylitol + NADP(+) = L-xylulose + NADPH + H(+). Its function is as follows. Catalyzes the NADPH-dependent reduction of several pentoses, tetroses, trioses, alpha-dicarbonyl compounds and L-xylulose. Participates in the uronate cycle of glucose metabolism. May play a role in the water absorption and cellular osmoregulation in the proximal renal tubules by producing xylitol, an osmolyte, thereby preventing osmolytic stress from occurring in the renal tubules. The sequence is that of L-xylulose reductase (DCXR) from Homo sapiens (Human).